Consider the following 95-residue polypeptide: MKSSLIKNTVNKKVKFKKGDLVQILSGSDKKKTGEIIAIIHKTSKVIVKGINLKVEASKDLSKKVETGEITKFEAPIHSSNVMLFSQKNNISSRF.

This sequence belongs to the universal ribosomal protein uL24 family. As to quaternary structure, part of the 50S ribosomal subunit.

The protein localises to the plastid. Its subcellular location is the chloroplast. In terms of biological role, one of two assembly initiator proteins, it binds directly to the 5'-end of the 23S rRNA, where it nucleates assembly of the 50S subunit. The sequence is that of Large ribosomal subunit protein uL24c (rpl24) from Porphyra purpurea (Red seaweed).